A 248-amino-acid chain; its full sequence is MSQLEKIYGVHAVQALLQHHPKRVKQIWLSEGRSEPRLETLLALAAENRVPVGQAERREMDAWVEGVHQGVVAEVSPSQVWGELMLEELLERTETPPLILVLDGVTDPHNLGACLRTADAAGATAVIVPKDKSATLTPVVRKVACGAAEVIPLVAVTNLARTLEKLQQRGLWVVGTAGEAEQEIYQQDLTGPLVMIMGAEGKGMRRLTREHCDFLVKLPMAGSVSSLNVSVATGVCLFEAVRQRQVKR.

S-adenosyl-L-methionine contacts are provided by Gly198, Leu218, and Leu227.

It belongs to the class IV-like SAM-binding methyltransferase superfamily. RNA methyltransferase TrmH family. RlmB subfamily.

Its subcellular location is the cytoplasm. It carries out the reaction guanosine(2251) in 23S rRNA + S-adenosyl-L-methionine = 2'-O-methylguanosine(2251) in 23S rRNA + S-adenosyl-L-homocysteine + H(+). Functionally, specifically methylates the ribose of guanosine 2251 in 23S rRNA. This is 23S rRNA (guanosine-2'-O-)-methyltransferase RlmB from Pseudomonas putida (strain ATCC 47054 / DSM 6125 / CFBP 8728 / NCIMB 11950 / KT2440).